A 328-amino-acid chain; its full sequence is Gonadotropin-releasing hormone receptor (328 aa).

The Extracellular segment spans residues 1–38 (MANSDSPEQNENHCSAINSSIPLTPGSLPTLTLSGKIR). Asn-18 is a glycosylation site (N-linked (GlcNAc...) asparagine). A helical transmembrane segment spans residues 39-58 (VTVTFFLFLLSTIFNTSFLL). Residues 59–77 (KLQNWTQRKEKRKKLSRMK) are Cytoplasmic-facing. Residues 78–97 (LLLKHLTLANLLETLIVMPL) form a helical membrane-spanning segment. Over 98 to 115 (DGMWNITVQWYAGELLCK) the chain is Extracellular. The N-linked (GlcNAc...) asparagine glycan is linked to Asn-102. Cysteines 114 and 196 form a disulfide. Residues 116-137 (VLSYLKLFSMYAPAFMMVVISL) traverse the membrane as a helical segment. Topologically, residues 138 to 164 (DRSLAITKPLAVKSNSKLGQFMIGLAW) are cytoplasmic. A helical membrane pass occupies residues 165–184 (LLSSIFAGPQLYIFGMIHLA). At 185-212 (DDSGQTEGFSQCVTHCSFPQWWHQAFYN) the chain is on the extracellular side. Residues 213–232 (FFTFSCLFIIPLLIMVICNA) traverse the membrane as a helical segment. Over 233–281 (KIIFTLTRVLHQDPHKLQLNQSKNNIPRARLRTLKMTVAFATSFTVCWT) the chain is Cytoplasmic. The chain crosses the membrane as a helical span at residues 282–300 (PYYVLGIWYWFDPDMVNRV). Over 301–306 (SDPVNH) the chain is Extracellular. A helical transmembrane segment spans residues 307–326 (FFFLFAFLNPCFDPLIYGYF). Residues 327–328 (SL) are Cytoplasmic-facing.

The protein belongs to the G-protein coupled receptor 1 family.

The protein localises to the cell membrane. Its function is as follows. Receptor for gonadotropin releasing hormone (GnRH) that mediates the action of GnRH to stimulate the secretion of the gonadotropic hormones luteinizing hormone (LH) and follicle-stimulating hormone (FSH). This receptor mediates its action by association with G-proteins that activate a phosphatidylinositol-calcium second messenger system. This Bos taurus (Bovine) protein is Gonadotropin-releasing hormone receptor (GNRHR).